Consider the following 292-residue polypeptide: uncharacterized protein (292 aa).

The segment at 1-213 is disordered; that stretch reads MTTAITPDKK…DQDDDDQKDL (213 aa). 2 stretches are compositionally biased toward basic residues: residues 27–43 and 50–78; these read TKPR…KSKK and AKKR…KKAP. Residues 90–100 show a composition bias toward polar residues; sequence QQAQASLQKPI. Residues 116-134 are compositionally biased toward pro residues; sequence PRPPTPIPPTGVKPEPAPR. The segment covering 143-158 has biased composition (low complexity); the sequence is SVSSTTPRTSATTGTT.

This is an uncharacterized protein from Caenorhabditis elegans.